A 129-amino-acid chain; its full sequence is Follitropin subunit beta (129 aa).

An N-terminal signal peptide occupies residues 1 to 20 (MKSVQFCFLFCCWRAICCRS). Intrachain disulfides connect C21/C69, C35/C84, C38/C122, C46/C100, C50/C102, and C105/C112. 2 N-linked (GlcNAc...) asparagine glycosylation sites follow: N25 and N42.

Belongs to the glycoprotein hormones subunit beta family. In terms of assembly, heterodimer. The active follitropin is a heterodimer composed of an alpha chain/CGA shared with other hormones and a unique beta chain/FSHB shown here.

The protein localises to the secreted. Together with the alpha chain CGA constitutes follitropin, the follicle-stimulating hormone, and provides its biological specificity to the hormone heterodimer. Binds FSHR, a G protein-coupled receptor, on target cells to activate downstream signaling pathways. Follitropin is involved in follicle development and spermatogenesis in reproductive organs. This chain is Follitropin subunit beta (FSHB), found in Bubalus bubalis (Domestic water buffalo).